We begin with the raw amino-acid sequence, 270 residues long: Orotidine 5'-phosphate decarboxylase (270 aa).

The active-site Proton donor is the Lys89.

It belongs to the OMP decarboxylase family. Type 2 subfamily.

It catalyses the reaction orotidine 5'-phosphate + H(+) = UMP + CO2. It functions in the pathway pyrimidine metabolism; UMP biosynthesis via de novo pathway; UMP from orotate: step 2/2. This Dehalococcoides mccartyi (strain ATCC BAA-2266 / KCTC 15142 / 195) (Dehalococcoides ethenogenes (strain 195)) protein is Orotidine 5'-phosphate decarboxylase.